The following is a 499-amino-acid chain: Hepatic triacylglycerol lipase (499 aa).

Residues 1–21 (MGSPLCVPIFLAVCILIQSST) form the signal peptide. Asparagine 78 carries an N-linked (GlcNAc...) asparagine glycan. Catalysis depends on serine 168, which acts as the Nucleophile. The active-site Charge relay system is aspartate 194. The segment at 254–277 (CHFLELYKHIAQHGLNALSQTIKC) is essential for determining substrate specificity. The active-site Charge relay system is the histidine 279. The 135-residue stretch at 352–486 (YHYQFKIQFI…HPTQEKNFVR (135 aa)) folds into the PLAT domain. Asparagine 397 carries N-linked (GlcNAc...) asparagine glycosylation.

It belongs to the AB hydrolase superfamily. Lipase family. In terms of assembly, homodimer.

The protein localises to the secreted. It catalyses the reaction a triacylglycerol + H2O = a diacylglycerol + a fatty acid + H(+). The enzyme catalyses a 1-acyl-sn-glycero-3-phosphocholine + H2O = sn-glycerol 3-phosphocholine + a fatty acid + H(+). It carries out the reaction a 1,2-diacyl-sn-glycero-3-phosphocholine + H2O = a 2-acyl-sn-glycero-3-phosphocholine + a fatty acid + H(+). The catalysed reaction is 1,2,3-tri-(9Z-octadecenoyl)-glycerol + H2O = di-(9Z)-octadecenoylglycerol + (9Z)-octadecenoate + H(+). It catalyses the reaction 1,2-di-(9Z-octadecenoyl)-sn-glycero-3-phosphocholine + H2O = (9Z-octadecenoyl)-sn-glycero-3-phosphocholine + (9Z)-octadecenoate + H(+). The enzyme catalyses 1,2,3-tributanoylglycerol + H2O = dibutanoylglycerol + butanoate + H(+). It carries out the reaction 1,2-dihexadecanoyl-sn-glycero-3-phosphocholine + H2O = hexadecanoyl-sn-glycero-3-phosphocholine + hexadecanoate + H(+). The catalysed reaction is 1,2-di-(9Z-octadecenoyl)-sn-glycerol + H2O = 2-(9Z-octadecenoyl)-glycerol + (9Z)-octadecenoate + H(+). It catalyses the reaction 1,2,3-tri-(9Z-octadecenoyl)-glycerol + H2O = 2,3-di-(9Z)-octadecenoyl-sn-glycerol + (9Z)-octadecenoate + H(+). The enzyme catalyses 1-(9Z-octadecenoyl)-sn-glycero-3-phospho-L-serine + H2O = sn-glycero-3-phospho-L-serine + (9Z)-octadecenoate + H(+). It carries out the reaction 1-hexadecanoyl-sn-glycero-3-phosphocholine + H2O = sn-glycerol 3-phosphocholine + hexadecanoate + H(+). The catalysed reaction is 1,3-di-(9Z-octadecenoyl)-glycerol + H2O = 3-(9Z-octadecenoyl)-sn-glycerol + (9Z)-octadecenoate + H(+). Functionally, catalyzes the hydrolysis of triglycerides and phospholipids present in circulating plasma lipoproteins, including chylomicrons, intermediate density lipoproteins (IDL), low density lipoproteins (LDL) of large size and high density lipoproteins (HDL), releasing free fatty acids (FFA) and smaller lipoprotein particles. Also exhibits lysophospholipase activity. Can hydrolyze both neutral lipid and phospholipid substrates but shows a greater binding affinity for neutral lipid substrates than phospholipid substrates. In native LDL, preferentially hydrolyzes the phosphatidylcholine species containing polyunsaturated fatty acids at sn-2 position. This chain is Hepatic triacylglycerol lipase (LIPC), found in Oryctolagus cuniculus (Rabbit).